Reading from the N-terminus, the 304-residue chain is Probable cobalamin biosynthesis protein CobD (304 aa).

5 helical membrane passes run 2 to 22 (IVVL…KEYI), 50 to 70 (ILFS…AVYL), 73 to 93 (FILV…FSIT), 147 to 167 (VDGY…GAFI), and 284 to 304 (AAYS…AVFL).

Belongs to the CobD/CbiB family.

Its subcellular location is the cell membrane. It functions in the pathway cofactor biosynthesis; adenosylcobalamin biosynthesis. Functionally, converts cobyric acid to cobinamide by the addition of aminopropanol on the F carboxylic group. In Thermoplasma volcanium (strain ATCC 51530 / DSM 4299 / JCM 9571 / NBRC 15438 / GSS1), this protein is Probable cobalamin biosynthesis protein CobD.